A 361-amino-acid chain; its full sequence is Chorismate synthase (361 aa).

Residue Arg-47 participates in NADP(+) binding. FMN is bound by residues 124-126 (RAS), Gly-286, 301-305 (KPTAT), and Arg-327.

Belongs to the chorismate synthase family. As to quaternary structure, homotetramer. The cofactor is FMNH2.

It carries out the reaction 5-O-(1-carboxyvinyl)-3-phosphoshikimate = chorismate + phosphate. Its pathway is metabolic intermediate biosynthesis; chorismate biosynthesis; chorismate from D-erythrose 4-phosphate and phosphoenolpyruvate: step 7/7. Catalyzes the anti-1,4-elimination of the C-3 phosphate and the C-6 proR hydrogen from 5-enolpyruvylshikimate-3-phosphate (EPSP) to yield chorismate, which is the branch point compound that serves as the starting substrate for the three terminal pathways of aromatic amino acid biosynthesis. This reaction introduces a second double bond into the aromatic ring system. The protein is Chorismate synthase of Prochlorococcus marinus (strain NATL1A).